A 127-amino-acid polypeptide reads, in one-letter code: Single-stranded DNA-binding protein 2 (127 aa).

Residues 4-103 (INKVMLVGRC…ITINTIELLG (100 aa)) enclose the SSB domain. A disordered region spans residues 104–127 (SPRKEESTSTSAPNETQAVANANF). Residues 111 to 127 (TSTSAPNETQAVANANF) are compositionally biased toward polar residues.

Homotetramer.

The protein is Single-stranded DNA-binding protein 2 (ssb2) of Nostoc sp. (strain PCC 7120 / SAG 25.82 / UTEX 2576).